Reading from the N-terminus, the 245-residue chain is AA9 family lytic polysaccharide monooxygenase B (245 aa).

An N-terminal signal peptide occupies residues 1–18 (MKSAIFAAAVLGAAGVSA). Cu(2+) is bound by residues histidine 19 and histidine 105. Residues cysteine 116 and cysteine 120 are joined by a disulfide bond. Residues histidine 179 and glutamine 188 each contribute to the O2 site. Cu(2+) is bound at residue tyrosine 190.

This sequence belongs to the polysaccharide monooxygenase AA9 family. Requires Cu(2+) as cofactor.

Its subcellular location is the secreted. The catalysed reaction is [(1-&gt;4)-beta-D-glucosyl]n+m + reduced acceptor + O2 = 4-dehydro-beta-D-glucosyl-[(1-&gt;4)-beta-D-glucosyl]n-1 + [(1-&gt;4)-beta-D-glucosyl]m + acceptor + H2O.. Lytic polysaccharide monooxygenase (LPMO) that depolymerizes crystalline and amorphous polysaccharides via the oxidation of scissile alpha- or beta-(1-4)-glycosidic bonds, yielding C1 or C4 oxidation products. Catalysis by LPMOs requires the reduction of the active-site copper from Cu(II) to Cu(I) by a reducing agent and H(2)O(2) or O(2) as a cosubstrate. Active on hemicelluloses, including xylan, glucomannan, and xyloglucan. Has no activity on ivory nut mannan (INM), a linear beta-1,4-linked mannan without substitutions. This is AA9 family lytic polysaccharide monooxygenase B from Malbranchea cinnamomea (Thermophilic fungus).